A 334-amino-acid polypeptide reads, in one-letter code: Probable type II restriction enzyme HindVP (334 aa).

The catalysed reaction is Endonucleolytic cleavage of DNA to give specific double-stranded fragments with terminal 5'-phosphates.. Functionally, a P subtype restriction enzyme that recognizes the double-stranded sequence 5'-GRCGYC-3'; the cleavage site is unknown. In Haemophilus influenzae (strain ATCC 51907 / DSM 11121 / KW20 / Rd), this protein is Probable type II restriction enzyme HindVP (hindVRP).